The primary structure comprises 554 residues: Formate--tetrahydrofolate ligase (554 aa).

Position 65-72 (65-72 (TPLGEGKT)) interacts with ATP.

The protein belongs to the formate--tetrahydrofolate ligase family.

The catalysed reaction is (6S)-5,6,7,8-tetrahydrofolate + formate + ATP = (6R)-10-formyltetrahydrofolate + ADP + phosphate. The protein operates within one-carbon metabolism; tetrahydrofolate interconversion. In Aliivibrio salmonicida (strain LFI1238) (Vibrio salmonicida (strain LFI1238)), this protein is Formate--tetrahydrofolate ligase.